A 37-amino-acid polypeptide reads, in one-letter code: Large ribosomal subunit protein bL36 (37 aa).

It belongs to the bacterial ribosomal protein bL36 family.

The protein is Large ribosomal subunit protein bL36 of Pasteurella multocida (strain Pm70).